The chain runs to 205 residues: Small ribosomal subunit protein uS4 (205 aa).

The segment at 27 to 46 (LNKRDYAPGQHGQRRKGKPS) is disordered. The 61-residue stretch at 118–178 (HGHVLVNGKR…HVDHRLMKGT (61 aa)) folds into the S4 RNA-binding domain.

This sequence belongs to the universal ribosomal protein uS4 family. In terms of assembly, part of the 30S ribosomal subunit. Contacts protein S5. The interaction surface between S4 and S5 is involved in control of translational fidelity.

One of the primary rRNA binding proteins, it binds directly to 16S rRNA where it nucleates assembly of the body of the 30S subunit. Functionally, with S5 and S12 plays an important role in translational accuracy. The sequence is that of Small ribosomal subunit protein uS4 from Granulibacter bethesdensis (strain ATCC BAA-1260 / CGDNIH1).